We begin with the raw amino-acid sequence, 252 residues long: MLKDVVISRAIVESYFKDLLNNLELDVAIVGAGPSGMVAGYYLAKGGAKVAIFEKKLSIGGGIWGGGMGFNKIVVQEEAKEILDEFDIRYEEFEKGYYVADAIEVATTIASKTVKAGVKIFNMVEVEDLVVKDDRVSGIVINWTPVKMTGLHVDPLTVEAKYVIDSTGHGAQVTQFLLKRGLIEKIPGEGAMWAEMGEKLTVENTKEVFPGLYVTGMAANAVSGAPRMGPIFGGMFLSGRKAAMEILQKLGL.

NAD(+)-binding positions include Ser-35, 54–55 (EK), Gly-62, Val-126, and 152–154 (HVD). The Fe cation site is built by Asp-154 and His-169. An NAD(+)-binding site is contributed by Met-217. Arg-227 serves as a coordination point for glycine.

It belongs to the THI4 family. In terms of assembly, homooctamer; tetramer of dimers. Fe(2+) is required as a cofactor.

It carries out the reaction hydrogen sulfide + glycine + NAD(+) = ADP-5-ethyl-4-methylthiazole-2-carboxylate + nicotinamide + 3 H2O + H(+). It participates in cofactor biosynthesis; thiamine diphosphate biosynthesis. Involved in the biosynthesis of the thiazole moiety of thiamine. Catalyzes the conversion of NAD and glycine to adenosine diphosphate 5-(2-hydroxyethyl)-4-methylthiazole-2-carboxylate (ADT), an adenylated thiazole intermediate, using free sulfide as a source of sulfur. This Pyrococcus furiosus (strain ATCC 43587 / DSM 3638 / JCM 8422 / Vc1) protein is Thiamine thiazole synthase.